We begin with the raw amino-acid sequence, 157 residues long: Endoribonuclease YbeY (157 aa).

His116, His120, and His126 together coordinate Zn(2+).

This sequence belongs to the endoribonuclease YbeY family. Zn(2+) serves as cofactor.

It is found in the cytoplasm. In terms of biological role, single strand-specific metallo-endoribonuclease involved in late-stage 70S ribosome quality control and in maturation of the 3' terminus of the 16S rRNA. In Renibacterium salmoninarum (strain ATCC 33209 / DSM 20767 / JCM 11484 / NBRC 15589 / NCIMB 2235), this protein is Endoribonuclease YbeY.